Here is a 509-residue protein sequence, read N- to C-terminus: Photosystem II CP47 reaction center protein (509 aa).

Transmembrane regions (helical) follow at residues 21 to 36 (AVHL…WAGS), 101 to 115 (IVLS…IWHW), 140 to 156 (GIHL…FGAF), 203 to 218 (IAAG…FHLT), 237 to 252 (VLSS…AFIT), and 457 to 472 (NFAL…HGSR).

The protein belongs to the PsbB/PsbC family. PsbB subfamily. PSII is composed of 1 copy each of membrane proteins PsbA, PsbB, PsbC, PsbD, PsbE, PsbF, PsbH, PsbI, PsbJ, PsbK, PsbL, PsbM, PsbT, PsbX, PsbY, PsbZ, Psb30/Ycf12, at least 3 peripheral proteins of the oxygen-evolving complex and a large number of cofactors. It forms dimeric complexes. Requires Binds multiple chlorophylls. PSII binds additional chlorophylls, carotenoids and specific lipids. as cofactor.

It localises to the plastid. The protein localises to the chloroplast thylakoid membrane. One of the components of the core complex of photosystem II (PSII). It binds chlorophyll and helps catalyze the primary light-induced photochemical processes of PSII. PSII is a light-driven water:plastoquinone oxidoreductase, using light energy to abstract electrons from H(2)O, generating O(2) and a proton gradient subsequently used for ATP formation. The chain is Photosystem II CP47 reaction center protein from Porphyra purpurea (Red seaweed).